The sequence spans 298 residues: Fe(II)/2-oxoglutarate-dependent dioxygenase nvfF (298 aa).

Fe cation contacts are provided by histidine 137, aspartate 139, and histidine 212.

Belongs to the PhyH family. As to quaternary structure, homodimer. The cofactor is Fe cation.

The catalysed reaction is fumigatonoid C + 2-oxoglutarate + O2 = novofumigatonin + succinate + CO2 + H2O. It functions in the pathway secondary metabolite biosynthesis; terpenoid biosynthesis. Fe(II)/2-oxoglutarate-dependent dioxygenase; part of the gene cluster that mediates the biosynthesis of novofumigatonin, a heavily oxygenated meroterpenoid containing a unique orthoester moiety. The first step of the pathway is the synthesis of 3,5-dimethylorsellinic acid (DMOA) by the polyketide synthase nvfA via condensation of one acetyl-CoA starter unit with 3 malonyl-CoA units and 2 methylations. DMOA is then converted to farnesyl-DMOA by the farnesyltransferase nvfB. Epoxydation by FAD-dependent monooxygenase nvfK, followed by a protonation-initiated cyclization catalyzed by the terpene cyclase nvfL leads to the production of asnavolin H. The short chain dehydrogenase nvfC then as a 3-OH dehydrogenase of asnovolin H to yield chemesin D. There are two branches to synthesize asnovolin A from chemesin D. In one branch, chemesin D undergoes Baeyer-Villiger oxidation by nvfH, methylation by nvfJ, and enoyl reduction by the nvfM D enoylreductase that reduces the double bond between C-5'and C-6', to form respectively asnovolin I, asnovolin K, and asnovolin A. In the other branch, the methylation precedes the Baeyer-Villiger oxidation and the enoyl reduction to yield asnovolin A via the asnovolin J intermediate. Asnovolin A is further converted to fumigatonoid A by the Fe(II)/2-oxoglutarate-dependent dioxygenase nvfI that catalyzes an endoperoxidation reaction. The alpha/beta hydrolase nvfD then acts as an epimerase that converts fumigatonoid A to its C-5' epimer, which then undergoes spontaneous or nvfD-catalyzed lactonization. The following step utilizes the ketoreductase nvfG to produce fumigatonoid B. The dioxygenase nvfE further converts fumigatonoid B into fumigatonoid C. Finally the Fe(II)/2-oxoglutarate-dependent dioxygenase nvfF catalyzes two rounds of oxidation to transform fumigatonoid C into the end product, novofumigatonin A. This Aspergillus novofumigatus (strain IBT 16806) protein is Fe(II)/2-oxoglutarate-dependent dioxygenase nvfF.